The following is a 400-amino-acid chain: Elongation factor Tu (400 aa).

Residues 10–209 (KPHVNIGTIG…EVDKYIPTPE (200 aa)) form the tr-type G domain. Positions 19–26 (GHVDHGKT) are G1. Residue 19–26 (GHVDHGKT) participates in GTP binding. T26 is a Mg(2+) binding site. The tract at residues 60–64 (GITIN) is G2. The tract at residues 81–84 (DCPG) is G3. Residues 81–85 (DCPGH) and 136–139 (NKAD) contribute to the GTP site. The tract at residues 136–139 (NKAD) is G4. A G5 region spans residues 174-176 (SGL).

Belongs to the TRAFAC class translation factor GTPase superfamily. Classic translation factor GTPase family. EF-Tu/EF-1A subfamily. As to quaternary structure, monomer.

It is found in the cytoplasm. It carries out the reaction GTP + H2O = GDP + phosphate + H(+). Its function is as follows. GTP hydrolase that promotes the GTP-dependent binding of aminoacyl-tRNA to the A-site of ribosomes during protein biosynthesis. In Heliobacterium modesticaldum (strain ATCC 51547 / Ice1), this protein is Elongation factor Tu.